Here is a 681-residue protein sequence, read N- to C-terminus: Potassium-transporting ATPase ATP-binding subunit (681 aa).

4 helical membrane passes run 30–50 (LLVYVGAILATSLYFLGFFGI), 59–79 (LAIALILWFTVLFANFAEAIA), 216–236 (ILLVTLSIIFLAVSATLLPFT), and 255–275 (IALLVCLAPTTIGALLSSIGI). Asp-306 acts as the 4-aspartylphosphate intermediate in catalysis. ATP contacts are provided by residues Asp-343, Glu-347, 376-383 (FTATTRMS), and Lys-394. Mg(2+) contacts are provided by Asp-517 and Asp-521. The next 3 membrane-spanning stretches (helical) occupy residues 587-607 (FAIIPVLFYGIFPQLEALNLM), 615-635 (AILSAIIYNAVIIIVLIPLSL), and 661-681 (LIAPFIAIKLIDMLLTVLGIV).

It belongs to the cation transport ATPase (P-type) (TC 3.A.3) family. Type IA subfamily. In terms of assembly, the system is composed of three essential subunits: KdpA, KdpB and KdpC.

Its subcellular location is the cell membrane. The catalysed reaction is K(+)(out) + ATP + H2O = K(+)(in) + ADP + phosphate + H(+). Part of the high-affinity ATP-driven potassium transport (or Kdp) system, which catalyzes the hydrolysis of ATP coupled with the electrogenic transport of potassium into the cytoplasm. This subunit is responsible for energy coupling to the transport system and for the release of the potassium ions to the cytoplasm. In Listeria monocytogenes serovar 1/2a (strain ATCC BAA-679 / EGD-e), this protein is Potassium-transporting ATPase ATP-binding subunit.